The sequence spans 557 residues: CTP synthase (557 aa).

The segment at 1-272 (MARSKIVKHI…DSLVLKKLML (272 aa)) is amidoligase domain. S18 contacts CTP. UTP is bound at residue S18. 19–24 (SLGKGI) lines the ATP pocket. Y59 is an L-glutamine binding site. Residue D76 coordinates ATP. Residues D76 and E146 each coordinate Mg(2+). CTP contacts are provided by residues 153–155 (DIE), 193–198 (KTKPTQ), and K229. UTP contacts are provided by residues 193–198 (KTKPTQ) and K229. In terms of domain architecture, Glutamine amidotransferase type-1 spans 299-543 (EIGVCGKYTK…VAEAKKFRDE (245 aa)). G363 contributes to the L-glutamine binding site. The active-site Nucleophile; for glutamine hydrolysis is the C390. L-glutamine-binding positions include 391 to 394 (LGMQ), E414, and R471. Active-site residues include H516 and E518.

It belongs to the CTP synthase family. Homotetramer.

The catalysed reaction is UTP + L-glutamine + ATP + H2O = CTP + L-glutamate + ADP + phosphate + 2 H(+). The enzyme catalyses L-glutamine + H2O = L-glutamate + NH4(+). It catalyses the reaction UTP + NH4(+) + ATP = CTP + ADP + phosphate + 2 H(+). It functions in the pathway pyrimidine metabolism; CTP biosynthesis via de novo pathway; CTP from UDP: step 2/2. Its activity is regulated as follows. Allosterically activated by GTP, when glutamine is the substrate; GTP has no effect on the reaction when ammonia is the substrate. The allosteric effector GTP functions by stabilizing the protein conformation that binds the tetrahedral intermediate(s) formed during glutamine hydrolysis. Inhibited by the product CTP, via allosteric rather than competitive inhibition. Functionally, catalyzes the ATP-dependent amination of UTP to CTP with either L-glutamine or ammonia as the source of nitrogen. Regulates intracellular CTP levels through interactions with the four ribonucleotide triphosphates. The polypeptide is CTP synthase (Chloroherpeton thalassium (strain ATCC 35110 / GB-78)).